The chain runs to 480 residues: Adenosylhomocysteinase (480 aa).

Residues Thr63, Asp142, and Glu203 each contribute to the substrate site. Residue 204–206 (TTT) participates in NAD(+) binding. Residues Lys233 and Asp237 each coordinate substrate. NAD(+)-binding positions include Asn238, 267–272 (GYGDVG), Glu290, Asn325, 346–348 (IGH), and Asn394.

Belongs to the adenosylhomocysteinase family. It depends on NAD(+) as a cofactor.

The protein resides in the cytoplasm. The catalysed reaction is S-adenosyl-L-homocysteine + H2O = L-homocysteine + adenosine. Its pathway is amino-acid biosynthesis; L-homocysteine biosynthesis; L-homocysteine from S-adenosyl-L-homocysteine: step 1/1. Functionally, may play a key role in the regulation of the intracellular concentration of adenosylhomocysteine. The chain is Adenosylhomocysteinase from Xanthomonas euvesicatoria pv. vesicatoria (strain 85-10) (Xanthomonas campestris pv. vesicatoria).